Here is a 244-residue protein sequence, read N- to C-terminus: Small ribosomal subunit protein uS2 (244 aa).

This sequence belongs to the universal ribosomal protein uS2 family.

This Endomicrobium trichonymphae protein is Small ribosomal subunit protein uS2.